Reading from the N-terminus, the 310-residue chain is Low affinity immunoglobulin gamma Fc region receptor II-b (310 aa).

The first 42 residues, 1–42, serve as a signal peptide directing secretion; sequence MGILSFLPVLATESDWADCKSPQPWGHMLLWTAVLFLAPVAG. The Extracellular portion of the chain corresponds to 43 to 217; that stretch reads TPAAPPKAVL…KPVTITVQAP (175 aa). Ig-like C2-type domains lie at 48–127 and 131–213; these read PKAV…VHLT and EWLV…VTIT. 2 disulfides stabilise this stretch: C71–C113 and C152–C196. N-linked (GlcNAc...) asparagine glycosylation is found at N106, N180, and N187. A helical membrane pass occupies residues 218–240; that stretch reads SSSPMGIIVAVVTGIAVAAIVAA. The Cytoplasmic portion of the chain corresponds to 241 to 310; it reads VVALIYCRKK…LEEPDDQNRI (70 aa). Positions 290-295 match the ITIM motif motif; it reads ITYSLL. Y292 carries the phosphotyrosine; by SRC-type Tyr-kinases modification.

As to quaternary structure, interacts with INPP5D/SHIP1. Interacts with FGR. Interacts with LYN. In terms of assembly, (Microbial infection) Isoform IIB1 interacts with measles virus protein N. Protein N is released in the blood following lysis of measles infected cells. This interaction presumably block inflammatory immune response. In terms of processing, phosphorylated by the SRC-type Tyr-kinases LYN and BLK. As to expression, is the most broadly distributed Fc-gamma-receptor. Expressed in monocyte, neutrophils, macrophages, basophils, eosinophils, Langerhans cells, B-cells, platelets cells and placenta (endothelial cells). Not detected in natural killer cells.

It localises to the cell membrane. In terms of biological role, receptor for the Fc region of complexed or aggregated immunoglobulins gamma. Low affinity receptor. Involved in a variety of effector and regulatory functions such as phagocytosis of immune complexes and modulation of antibody production by B-cells. Binding to this receptor results in down-modulation of previous state of cell activation triggered via antigen receptors on B-cells (BCR), T-cells (TCR) or via another Fc receptor. Isoform IIB1 fails to mediate endocytosis or phagocytosis. Isoform IIB2 does not trigger phagocytosis. In Homo sapiens (Human), this protein is Low affinity immunoglobulin gamma Fc region receptor II-b (FCGR2B).